We begin with the raw amino-acid sequence, 159 residues long: Neuroglobin (159 aa).

In terms of domain architecture, Globin spans 3–151 (KLSEKDKELI…VVAAMSQGWA (149 aa)). Heme b-binding residues include histidine 66 and histidine 98.

Belongs to the globin family. In terms of assembly, monomer. Homodimers and homotetramers. Mainly monomeric but also detected as part of homodimers and homotetramers.

The protein localises to the cytoplasm. Its subcellular location is the cytosol. It is found in the mitochondrion matrix. It carries out the reaction Fe(III)-heme b-[protein] + nitric oxide + H2O = Fe(II)-heme b-[protein] + nitrite + 2 H(+). Monomeric globin with a bis-histidyl six-coordinate heme-iron atom through which it can bind dioxygen, carbon monoxide and nitric oxide. Could help transport oxygen and increase its availability to the metabolically active neuronal tissues, though its low quantity in tissues as well as its high affinity for dioxygen, which may limit its oxygen-releasing ability, argue against it. The ferrous/deoxygenated form exhibits a nitrite reductase activity and it could produce nitric oxide which in turn inhibits cellular respiration in response to hypoxia. In its ferrous/deoxygenated state, it may also exhibit GDI (Guanine nucleotide Dissociation Inhibitor) activity toward heterotrimeric G-alpha proteins, thereby regulating signal transduction to facilitate neuroprotective responses in the wake of hypoxia and associated oxidative stress. This is Neuroglobin (ngb) from Dissostichus mawsoni (Antarctic cod).